The primary structure comprises 438 residues: Enolase (438 aa).

Residue Gln174 participates in (2R)-2-phosphoglycerate binding. Glu216 (proton donor) is an active-site residue. The Mg(2+) site is built by Asp253, Glu297, and Asp324. (2R)-2-phosphoglycerate is bound by residues Lys349, Arg378, Ser379, and Lys400. Catalysis depends on Lys349, which acts as the Proton acceptor.

This sequence belongs to the enolase family. In terms of assembly, component of the RNA degradosome, a multiprotein complex involved in RNA processing and mRNA degradation. The cofactor is Mg(2+).

It is found in the cytoplasm. The protein localises to the secreted. Its subcellular location is the cell surface. The catalysed reaction is (2R)-2-phosphoglycerate = phosphoenolpyruvate + H2O. It functions in the pathway carbohydrate degradation; glycolysis; pyruvate from D-glyceraldehyde 3-phosphate: step 4/5. Catalyzes the reversible conversion of 2-phosphoglycerate (2-PG) into phosphoenolpyruvate (PEP). It is essential for the degradation of carbohydrates via glycolysis. This chain is Enolase, found in Psychrobacter sp. (strain PRwf-1).